A 574-amino-acid polypeptide reads, in one-letter code: Acetolactate synthase isozyme 3 large subunit (574 aa).

Residue glutamate 51 participates in thiamine diphosphate binding. FAD contacts are provided by residues arginine 153, 261-282, and 304-323; these read HGTYEANMTMHNADVIFAVGVR and DIDPTSISKTVTADIPIVGD. A thiamine pyrophosphate binding region spans residues 397-477; sequence QHQMFAALYY…VLVVNLNNRY (81 aa). Mg(2+)-binding residues include aspartate 448 and asparagine 475.

Belongs to the TPP enzyme family. Dimer of large and small chains. The cofactor is Mg(2+). Thiamine diphosphate is required as a cofactor.

The enzyme catalyses 2 pyruvate + H(+) = (2S)-2-acetolactate + CO2. Its pathway is amino-acid biosynthesis; L-isoleucine biosynthesis; L-isoleucine from 2-oxobutanoate: step 1/4. It functions in the pathway amino-acid biosynthesis; L-valine biosynthesis; L-valine from pyruvate: step 1/4. With respect to regulation, sensitive to valine inhibition. The chain is Acetolactate synthase isozyme 3 large subunit (ilvI) from Escherichia coli (strain K12).